Consider the following 156-residue polypeptide: Small ribosomal subunit protein uS7 (156 aa).

It belongs to the universal ribosomal protein uS7 family. In terms of assembly, part of the 30S ribosomal subunit. Contacts proteins S9 and S11.

Functionally, one of the primary rRNA binding proteins, it binds directly to 16S rRNA where it nucleates assembly of the head domain of the 30S subunit. Is located at the subunit interface close to the decoding center, probably blocks exit of the E-site tRNA. The protein is Small ribosomal subunit protein uS7 of Rhodopseudomonas palustris (strain BisA53).